The primary structure comprises 172 residues: Zinc finger C2HC domain-containing protein 1B (172 aa).

C2HC/C3H-type zinc fingers lie at residues 14–43 and 117–146; these read KLFPCEVCGRCFATDVLERHGPICKKVFNK and DYIQCPYCMRRFNETAAQRHINFCKNQTSR. The Zn(2+) site is built by C18, C21, H33, C37, C121, C124, H136, and C140.

Belongs to the ZC2HC1 family. Zn(2+) serves as cofactor.

The polypeptide is Zinc finger C2HC domain-containing protein 1B (Zc2hc1b) (Mus musculus (Mouse)).